A 259-amino-acid polypeptide reads, in one-letter code: Nodulation protein J (259 aa).

One can recognise an ABC transmembrane type-2 domain in the interval A30–R256. 6 helical membrane-spanning segments follow: residues I32–V52, A64–I84, A116–L136, W141–L161, Y174–F194, and I228–V248.

This sequence belongs to the ABC-2 integral membrane protein family. Lipooligosaccharide exporter (TC 3.A.1.102) subfamily. The complex is composed of two ATP-binding proteins (NodI) and two transmembrane proteins (NodJ).

Its subcellular location is the cell inner membrane. In terms of biological role, part of the ABC transporter complex NodIJ involved in the export of the nodulation factors (Nod factors), the bacterial signal molecules that induce symbiosis and subsequent nodulation induction. Nod factors are LCO (lipo-chitin oligosaccharide), a modified beta-1,4-linked N-acetylglucosamine oligosaccharide. This subunit encodes the transporter. The protein is Nodulation protein J (nodJ) of Rhizobium leguminosarum bv. viciae.